We begin with the raw amino-acid sequence, 360 residues long: Squamosa promoter-binding-like protein 7 (360 aa).

Residues 74–89 (AQGSGGGGGGGGGGSA) show a composition bias toward gly residues. A disordered region spans residues 74 to 98 (AQGSGGGGGGGGGGSADQGKRKEKA). Residues 105-182 (VPRCQVEGCD…AGHNERRRRS (78 aa)) form an SBP-type zinc finger. Zn(2+)-binding residues include Cys108, Cys113, Cys130, His133, Cys149, Cys152, His156, and Cys168. The Bipartite nuclear localization signal signature appears at 165–181 (KKSCRRRLAGHNERRRR). Positions 172–182 (LAGHNERRRRS) are enriched in basic residues. 3 disordered regions span residues 172-196 (LAGHNERRRRSNASEAMARGSAHPH), 261-306 (FFSD…HEHQ), and 320-360 (AAGG…ARVV).

Expressed in young panicles.

It localises to the nucleus. Trans-acting factor that binds specifically to the consensus nucleotide sequence 5'-TNCGTACAA-3'. May be involved in panicle development. This chain is Squamosa promoter-binding-like protein 7 (SPL7), found in Oryza sativa subsp. indica (Rice).